We begin with the raw amino-acid sequence, 506 residues long: Kynureninase 1 (506 aa).

Residues Leu141, Thr142, 169 to 172 (FPSD), Asp254, His257, and Tyr279 each bind pyridoxal 5'-phosphate. Residue Lys280 is modified to N6-(pyridoxal phosphate)lysine. Residues 303-319 (ETAPTTTPDGTNGNPKT) show a composition bias toward low complexity. Residues 303–322 (ETAPTTTPDGTNGNPKTISD) are disordered. 2 residues coordinate pyridoxal 5'-phosphate: Trp334 and Asn362.

The protein belongs to the kynureninase family. Homodimer. Requires pyridoxal 5'-phosphate as cofactor.

The protein resides in the cytoplasm. The catalysed reaction is L-kynurenine + H2O = anthranilate + L-alanine + H(+). It carries out the reaction 3-hydroxy-L-kynurenine + H2O = 3-hydroxyanthranilate + L-alanine + H(+). Its pathway is amino-acid degradation; L-kynurenine degradation; L-alanine and anthranilate from L-kynurenine: step 1/1. The protein operates within cofactor biosynthesis; NAD(+) biosynthesis; quinolinate from L-kynurenine: step 2/3. Its function is as follows. Catalyzes the cleavage of L-kynurenine (L-Kyn) and L-3-hydroxykynurenine (L-3OHKyn) into anthranilic acid (AA) and 3-hydroxyanthranilic acid (3-OHAA), respectively. The protein is Kynureninase 1 of Phaeosphaeria nodorum (strain SN15 / ATCC MYA-4574 / FGSC 10173) (Glume blotch fungus).